The chain runs to 209 residues: Uracil phosphoribosyltransferase (209 aa).

Residues Arg-79, Arg-104, and 131 to 139 contribute to the 5-phospho-alpha-D-ribose 1-diphosphate site; that span reads DPMLATGGS. Residues Ile-194 and 199–201 contribute to the uracil site; that span reads GDA. Residue Asp-200 participates in 5-phospho-alpha-D-ribose 1-diphosphate binding.

Belongs to the UPRTase family. It depends on Mg(2+) as a cofactor.

It carries out the reaction UMP + diphosphate = 5-phospho-alpha-D-ribose 1-diphosphate + uracil. It functions in the pathway pyrimidine metabolism; UMP biosynthesis via salvage pathway; UMP from uracil: step 1/1. With respect to regulation, allosterically activated by GTP. Functionally, catalyzes the conversion of uracil and 5-phospho-alpha-D-ribose 1-diphosphate (PRPP) to UMP and diphosphate. This Levilactobacillus brevis (strain ATCC 367 / BCRC 12310 / CIP 105137 / JCM 1170 / LMG 11437 / NCIMB 947 / NCTC 947) (Lactobacillus brevis) protein is Uracil phosphoribosyltransferase.